We begin with the raw amino-acid sequence, 350 residues long: Izumo sperm-egg fusion protein 1 (350 aa).

The signal sequence occupies residues 1–21 (MGPHFTLLCAALAGCLLPAEG). 5 cysteine pairs are disulfide-bonded: cysteine 22–cysteine 149, cysteine 25–cysteine 152, cysteine 135–cysteine 159, cysteine 139–cysteine 165, and cysteine 182–cysteine 233. Over 22-292 (CVICDPSVVL…LQPEKMLASR (271 aa)) the chain is Extracellular. Residues 148–160 (WCKNCKKEVHACR) are important for interaction with IZUMO1R. The region spanning 167–251 (ERNVEVPQME…PATIINFHVT (85 aa)) is the Ig-like C2-type domain. N-linked (GlcNAc...) asparagine glycosylation is present at asparagine 204. A helical membrane pass occupies residues 293-313 (LLGLLICGSLALITGLTFAIF). The Cytoplasmic segment spans residues 314–350 (RRRKVIDFIKSSLFGLGSGAAEQTQVPKEKATDSRQQ). Serine 325 is subject to Phosphoserine.

It belongs to the Izumo family. In terms of assembly, monomer, homodimer; disulfide-linked and homooligomer; depending on the context. Interacts with IZUMO1R/JUNO. IZUMO1 and IZUMO1R/JUNO form a complex with 1:1 stoichiometry. In gamete recognition, IZUMO1R/JUNO first binds to monomeric IZUMO1. The weak, but specific interaction with IZUMO1R/JUNO induces IZUMO1 homodimerization. The process follows a tight binding phase where IZUMO1 bends the entire structure towards the sperm membrane side through a thiol-disulfide exchange reaction. The molecule no longer binds to IZUMO1R/JUNO and instead binds to a putative second oocyte receptor. Interacts with ACE3. Part of a oolemmal binding multimeric complex (IZUMO1 complex) composed at least of IZUMO1 and GLIPR1L1; the complex assemblage is influenced by the maturation status of the male germ cell. Interacts with GLIPR1L1. Interacts with FREY; the interaction retains IZUMO1 at the endoplasmic reticulum membrane and coordinates IZUMO1 complex assembly. Interacts with FCRL3/MAIA (via extracellular domain); the interaction replaces IZUMO1R/JUNO as IZUMO1 receptor after sperm-egg adhesion. Interacts with WDR54. Forms a complex with SPACA6 and TMEM81 on spermatocyte cell membrane. Post-translationally, N-glycosylated. Glycosylation is not essential for fusion and for proper protein trafficking in sperm. In terms of processing, phosphorylated. The cytoplasmic C-terminus is phosphorylated and undergoes phosphorylation changes during epididymal transit. Sperm-specific (at protein level). Detectable on sperm surface only after the acrosome reaction.

It localises to the cell membrane. The protein localises to the cytoplasmic vesicle. It is found in the secretory vesicle. Its subcellular location is the acrosome membrane. Essential sperm cell-surface protein required for fertilization by acting as a ligand for IZUMO1R/JUNO receptor on egg. The IZUMO1:IZUMO1R/JUNO interaction is a necessary adhesion event between sperm and egg that is required for fertilization but is not sufficient for cell fusion. The ligand-receptor interaction probably does not act as a membrane 'fusogen'. Acts a ligand for the human-specific oolemma epitope FCRL3/MAIA during fertilization. FCRL3/MAIA replaces IZUMO1R/JUNO as IZUMO1 receptor after sperm-egg adhesion, which permits species-specific gamete fusion. Plays a critical role in sperm-oolemma binding prior to plasma membrane fusion. Can mediate cell-cell fusion in cultured mammalian cells independently of its binding to IZUMO1R/JUNO. In Homo sapiens (Human), this protein is Izumo sperm-egg fusion protein 1.